Here is a 235-residue protein sequence, read N- to C-terminus: MERLTRWLLVMMAMLLAASGLVWFYNSNHLPVKQVSLKGNLVYSDKKTLGSLAKEYIHGNILRTDINGAQEAYRRYPWIASVMVRRRFPDTVEVVLTERKPVARWGDHALVDGEGNVFEARLDRPGMPVFRGAEGTSAEMLRRYDEFSTVLAKQGLGIKEMTYTARSAWIVVLDNGITVRLGRENEMKRLRLFTEAWQHLLRKNKNRLSYVDMRYKDGFSVRYASDGLPEKESEE.

Topologically, residues 1–6 (MERLTR) are cytoplasmic. Residues 7–25 (WLLVMMAMLLAASGLVWFY) traverse the membrane as a helical segment. Residues 26-235 (NSNHLPVKQV…DGLPEKESEE (210 aa)) lie on the Periplasmic side of the membrane. Positions 30–99 (LPVKQVSLKG…DTVEVVLTER (70 aa)) constitute a POTRA domain.

This sequence belongs to the FtsQ/DivIB family. FtsQ subfamily. Part of a complex composed of FtsB, FtsL and FtsQ.

The protein resides in the cell inner membrane. Functionally, essential cell division protein. May link together the upstream cell division proteins, which are predominantly cytoplasmic, with the downstream cell division proteins, which are predominantly periplasmic. May control correct divisome assembly. This is Cell division protein FtsQ from Neisseria meningitidis serogroup B (strain ATCC BAA-335 / MC58).